The chain runs to 185 residues: Elongation factor P (185 aa).

Belongs to the elongation factor P family.

The protein resides in the cytoplasm. The protein operates within protein biosynthesis; polypeptide chain elongation. Functionally, involved in peptide bond synthesis. Stimulates efficient translation and peptide-bond synthesis on native or reconstituted 70S ribosomes in vitro. Probably functions indirectly by altering the affinity of the ribosome for aminoacyl-tRNA, thus increasing their reactivity as acceptors for peptidyl transferase. This chain is Elongation factor P, found in Caldicellulosiruptor saccharolyticus (strain ATCC 43494 / DSM 8903 / Tp8T 6331).